The chain runs to 275 residues: Nitrogenase iron protein (275 aa).

9–16 (GKGGIGKS) is an ATP binding site. [4Fe-4S] cluster is bound at residue Cys-97. An ADP-ribosylarginine; by dinitrogenase reductase ADP-ribosyltransferase modification is found at Arg-100. Cys-132 contacts [4Fe-4S] cluster.

Belongs to the NifH/BchL/ChlL family. In terms of assembly, homodimer. Requires [4Fe-4S] cluster as cofactor. In terms of processing, the reversible ADP-ribosylation of Arg-100 inactivates the nitrogenase reductase and regulates nitrogenase activity.

It carries out the reaction N2 + 8 reduced [2Fe-2S]-[ferredoxin] + 16 ATP + 16 H2O = H2 + 8 oxidized [2Fe-2S]-[ferredoxin] + 2 NH4(+) + 16 ADP + 16 phosphate + 6 H(+). In terms of biological role, the key enzymatic reactions in nitrogen fixation are catalyzed by the nitrogenase complex, which has 2 components: the iron protein and the molybdenum-iron protein. The protein is Nitrogenase iron protein (nifH) of Methanococcus maripaludis (Methanococcus deltae).